A 231-amino-acid polypeptide reads, in one-letter code: Ribose-5-phosphate isomerase A (231 aa).

Substrate-binding positions include 28 to 31, 83 to 86, and 96 to 99; these read TGST, DGAD, and KGGG. Glu105 functions as the Proton acceptor in the catalytic mechanism. Lys123 provides a ligand contact to substrate.

The protein belongs to the ribose 5-phosphate isomerase family. As to quaternary structure, homodimer.

It catalyses the reaction aldehydo-D-ribose 5-phosphate = D-ribulose 5-phosphate. The protein operates within carbohydrate degradation; pentose phosphate pathway; D-ribose 5-phosphate from D-ribulose 5-phosphate (non-oxidative stage): step 1/1. In terms of biological role, catalyzes the reversible conversion of ribose-5-phosphate to ribulose 5-phosphate. The polypeptide is Ribose-5-phosphate isomerase A (Agrobacterium fabrum (strain C58 / ATCC 33970) (Agrobacterium tumefaciens (strain C58))).